Here is a 192-residue protein sequence, read N- to C-terminus: MVVGLLGGSFDPPHPGHVHITREALKRFGLDRVWWLVSPGNPLKPRPPAPLARRLAEARRLMRHPRVAVTGLEAEIGTRFTAETLAVLQRRYPGVRFVWLMGADNLAQFHRWERWRAIMESVPVGVLARPGAGLRARTSPAARRYASALLPEAEAARLGRSAAPAWCFVNLPMMDLSSTEIRATGRWRGQAD.

Belongs to the NadD family.

The enzyme catalyses nicotinate beta-D-ribonucleotide + ATP + H(+) = deamido-NAD(+) + diphosphate. It participates in cofactor biosynthesis; NAD(+) biosynthesis; deamido-NAD(+) from nicotinate D-ribonucleotide: step 1/1. Functionally, catalyzes the reversible adenylation of nicotinate mononucleotide (NaMN) to nicotinic acid adenine dinucleotide (NaAD). In Cereibacter sphaeroides (strain ATCC 17029 / ATH 2.4.9) (Rhodobacter sphaeroides), this protein is Probable nicotinate-nucleotide adenylyltransferase.